A 31-amino-acid chain; its full sequence is Conotoxin pc6b (31 aa).

3 disulfide bridges follow: Cys-2–Cys-20, Cys-9–Cys-25, and Cys-19–Cys-29.

This sequence belongs to the conotoxin O1 superfamily. As to expression, expressed by the venom duct.

Its subcellular location is the secreted. The sequence is that of Conotoxin pc6b from Conus pictus (Cone snail).